We begin with the raw amino-acid sequence, 356 residues long: Alanine racemase (356 aa).

Lysine 35 serves as the catalytic Proton acceptor; specific for D-alanine. Residue lysine 35 is modified to N6-(pyridoxal phosphate)lysine. Arginine 130 contacts substrate. The Proton acceptor; specific for L-alanine role is filled by tyrosine 253. Methionine 301 contributes to the substrate binding site.

It belongs to the alanine racemase family. Requires pyridoxal 5'-phosphate as cofactor.

The enzyme catalyses L-alanine = D-alanine. The protein operates within amino-acid biosynthesis; D-alanine biosynthesis; D-alanine from L-alanine: step 1/1. Its function is as follows. Catalyzes the interconversion of L-alanine and D-alanine. May also act on other amino acids. The polypeptide is Alanine racemase (alr) (Paraburkholderia phytofirmans (strain DSM 17436 / LMG 22146 / PsJN) (Burkholderia phytofirmans)).